The chain runs to 323 residues: tRNA dimethylallyltransferase (323 aa).

12 to 19 is an ATP binding site; sequence GPTAAGKT. Residue 14–19 participates in substrate binding; that stretch reads TAAGKT. Interaction with substrate tRNA regions lie at residues 37 to 40 and 161 to 165; these read DSAL and QRLIR.

It belongs to the IPP transferase family. Monomer. Requires Mg(2+) as cofactor.

The catalysed reaction is adenosine(37) in tRNA + dimethylallyl diphosphate = N(6)-dimethylallyladenosine(37) in tRNA + diphosphate. Functionally, catalyzes the transfer of a dimethylallyl group onto the adenine at position 37 in tRNAs that read codons beginning with uridine, leading to the formation of N6-(dimethylallyl)adenosine (i(6)A). The sequence is that of tRNA dimethylallyltransferase from Pseudomonas savastanoi pv. phaseolicola (strain 1448A / Race 6) (Pseudomonas syringae pv. phaseolicola (strain 1448A / Race 6)).